The primary structure comprises 329 residues: GTP 3',8-cyclase (329 aa).

In terms of domain architecture, Radical SAM core spans alanine 8 to alanine 234. GTP is bound at residue arginine 17. [4Fe-4S] cluster contacts are provided by cysteine 24 and cysteine 28. Tyrosine 30 is an S-adenosyl-L-methionine binding site. [4Fe-4S] cluster is bound at residue cysteine 31. Position 68 (arginine 68) interacts with GTP. Glycine 72 is an S-adenosyl-L-methionine binding site. Residue threonine 99 participates in GTP binding. Serine 123 contacts S-adenosyl-L-methionine. Lysine 160 is a binding site for GTP. Residue methionine 194 participates in S-adenosyl-L-methionine binding. [4Fe-4S] cluster is bound by residues cysteine 257 and cysteine 260. Arginine 262 to arginine 264 serves as a coordination point for GTP. Cysteine 274 serves as a coordination point for [4Fe-4S] cluster.

It belongs to the radical SAM superfamily. MoaA family. As to quaternary structure, monomer and homodimer. Requires [4Fe-4S] cluster as cofactor.

The enzyme catalyses GTP + AH2 + S-adenosyl-L-methionine = (8S)-3',8-cyclo-7,8-dihydroguanosine 5'-triphosphate + 5'-deoxyadenosine + L-methionine + A + H(+). The protein operates within cofactor biosynthesis; molybdopterin biosynthesis. In terms of biological role, catalyzes the cyclization of GTP to (8S)-3',8-cyclo-7,8-dihydroguanosine 5'-triphosphate. The chain is GTP 3',8-cyclase from Klebsiella pneumoniae (strain 342).